The chain runs to 644 residues: Arginine--tRNA ligase (644 aa).

The 'HIGH' region motif lies at 129 to 139 (ANPIHPLHLGH).

It belongs to the class-I aminoacyl-tRNA synthetase family.

Its subcellular location is the cytoplasm. The catalysed reaction is tRNA(Arg) + L-arginine + ATP = L-arginyl-tRNA(Arg) + AMP + diphosphate. This Aeropyrum pernix (strain ATCC 700893 / DSM 11879 / JCM 9820 / NBRC 100138 / K1) protein is Arginine--tRNA ligase (argS).